The sequence spans 223 residues: 7-cyano-7-deazaguanine synthase (223 aa).

10-20 is a binding site for ATP; that stretch reads FSGGQDSTTCL. Cysteine 188, cysteine 197, cysteine 200, and cysteine 203 together coordinate Zn(2+).

Belongs to the QueC family. It depends on Zn(2+) as a cofactor.

The enzyme catalyses 7-carboxy-7-deazaguanine + NH4(+) + ATP = 7-cyano-7-deazaguanine + ADP + phosphate + H2O + H(+). It functions in the pathway purine metabolism; 7-cyano-7-deazaguanine biosynthesis. Catalyzes the ATP-dependent conversion of 7-carboxy-7-deazaguanine (CDG) to 7-cyano-7-deazaguanine (preQ(0)). The protein is 7-cyano-7-deazaguanine synthase of Phocaeicola vulgatus (strain ATCC 8482 / DSM 1447 / JCM 5826 / CCUG 4940 / NBRC 14291 / NCTC 11154) (Bacteroides vulgatus).